The following is a 346-amino-acid chain: Flap endonuclease 1 (346 aa).

The segment at 1-102 (MGVTELGKLI…LEIEQRKKAK (102 aa)) is N-domain. Positions 31, 84, 156, 158, 177, 179, and 239 each coordinate Mg(2+). Residues 120–261 (DVAKYAKRAI…KALKLIWEFG (142 aa)) are I-domain.

Belongs to the XPG/RAD2 endonuclease family. FEN1 subfamily. Interacts with PCNA. PCNA stimulates the nuclease activity without altering cleavage specificity. Requires Mg(2+) as cofactor.

Structure-specific nuclease with 5'-flap endonuclease and 5'-3' exonuclease activities involved in DNA replication and repair. During DNA replication, cleaves the 5'-overhanging flap structure that is generated by displacement synthesis when DNA polymerase encounters the 5'-end of a downstream Okazaki fragment. Binds the unpaired 3'-DNA end and kinks the DNA to facilitate 5' cleavage specificity. Cleaves one nucleotide into the double-stranded DNA from the junction in flap DNA, leaving a nick for ligation. Also involved in the base excision repair (BER) pathway. Acts as a genome stabilization factor that prevents flaps from equilibrating into structures that lead to duplications and deletions. Also possesses 5'-3' exonuclease activity on nicked or gapped double-stranded DNA. The chain is Flap endonuclease 1 from Pyrobaculum calidifontis (strain DSM 21063 / JCM 11548 / VA1).